We begin with the raw amino-acid sequence, 421 residues long: MEVHPISEFASPFEVFKCIERDFKVAGLLESIGGPQYKARYSVIAWSTNGYLKIHDDPVNILNGYLKDLKLADIPGLFKGGMIGYISYDAVRFWEKIRDLKPAAEDWPYAEFFTPDNIIIYDHNEGKVYVNADLSSVGGCGDIGEFKVSFYDESLNKNSYERIVSESLEYIRSGYIFQVVLSRFYRYIFSGDPLRIYYNLRRINPSPYMFYLKFDEKYLIGSSPELLFRVQDNIVETYPIAGTRPRGADQEEDLKLELELMNSEKDKAEHLMLVDLARNDLGKVCVPGTVKVPELMYVEKYSHVQHIVSKVIGTLKKKYNALNVLSATFPAGTVSGAPKPMAMNIIETLEEYKRGPYAGAVGFISADGNAEFAIAIRTAFLNKELLRIHAGAGIVYDSNPESEYFETEHKLKALKTAIGVR.

L-tryptophan-binding positions include Ser31 and 207 to 209 (PYM). 242–243 (GT) lines the chorismate pocket. A Mg(2+)-binding site is contributed by Glu269. Residues Tyr357, Arg377, 391–393 (GAG), and Gly393 each bind chorismate. Glu406 serves as a coordination point for Mg(2+).

Belongs to the anthranilate synthase component I family. In terms of assembly, heterotetramer consisting of two non-identical subunits: a beta subunit (TrpG) and a large alpha subunit (TrpE). The cofactor is Mg(2+).

It catalyses the reaction chorismate + L-glutamine = anthranilate + pyruvate + L-glutamate + H(+). It participates in amino-acid biosynthesis; L-tryptophan biosynthesis; L-tryptophan from chorismate: step 1/5. Its activity is regulated as follows. Cooperatively feedback inhibited by tryptophan. In terms of biological role, part of a heterotetrameric complex that catalyzes the two-step biosynthesis of anthranilate, an intermediate in the biosynthesis of L-tryptophan. In the first step, the glutamine-binding beta subunit (TrpG) of anthranilate synthase (AS) provides the glutamine amidotransferase activity which generates ammonia as a substrate that, along with chorismate, is used in the second step, catalyzed by the large alpha subunit of AS (TrpE) to produce anthranilate. In the absence of TrpG, TrpE can synthesize anthranilate directly from chorismate and high concentrations of ammonia. The sequence is that of Anthranilate synthase component 1 (trpE) from Saccharolobus solfataricus (strain ATCC 35092 / DSM 1617 / JCM 11322 / P2) (Sulfolobus solfataricus).